The primary structure comprises 98 residues: UPF0235 protein CCNA_03737 (98 aa).

This sequence belongs to the UPF0235 family.

This Caulobacter vibrioides (strain NA1000 / CB15N) (Caulobacter crescentus) protein is UPF0235 protein CCNA_03737.